The sequence spans 158 residues: MGIEGVLEKGFVTTSADKLINWARTGSLWPMTFGLACCAVEMMHAGASRYDLDRFGVVFRPSPRQSDVMIVAGTLVNKMAPALRKVYDQMAEPRWVISMGSCANGGGYYHYSYAVVRGCDRIVPVDIYVPGCPPTAEALLYGILQLQNKIRRTNTIAR.

Positions 37, 38, 102, and 132 each coordinate [4Fe-4S] cluster.

This sequence belongs to the complex I 20 kDa subunit family. NDH-1 is composed of 14 different subunits. Subunits NuoB, C, D, E, F, and G constitute the peripheral sector of the complex. The cofactor is [4Fe-4S] cluster.

The protein resides in the cell inner membrane. The catalysed reaction is a quinone + NADH + 5 H(+)(in) = a quinol + NAD(+) + 4 H(+)(out). Functionally, NDH-1 shuttles electrons from NADH, via FMN and iron-sulfur (Fe-S) centers, to quinones in the respiratory chain. The immediate electron acceptor for the enzyme in this species is believed to be ubiquinone. Couples the redox reaction to proton translocation (for every two electrons transferred, four hydrogen ions are translocated across the cytoplasmic membrane), and thus conserves the redox energy in a proton gradient. This chain is NADH-quinone oxidoreductase subunit B, found in Thioalkalivibrio sulfidiphilus (strain HL-EbGR7).